Here is a 606-residue protein sequence, read N- to C-terminus: NADH-ubiquinone oxidoreductase chain 5 (606 aa).

Transmembrane regions (helical) follow at residues 3 to 23, 38 to 58, 87 to 107, 124 to 144, 180 to 200, 216 to 236, 244 to 264, 276 to 296, 304 to 323, 328 to 350, 369 to 389, 404 to 424, 460 to 480, 483 to 503, and 586 to 606; these read VINLIPTLMLTSLIILTLPII, ITKTAVTYAFAISLIPTLLFI, FFSLTFMPIALFITWSIMEFS, LLLFLITMLILVSANNLLQLF, IGDMGFIMMMAWFTIHLNSWE, LLGLLLASAGKSAQFGLHPWL, TPVSALLHSSTMVMAGVFTLI, IQTSTLCLGAITTLFTAICAL, IIALSTSSQLGLMMVTIGIN, AFIHMCTHAFFKAMLFLSSGSII, MPITSTAIIIGSLALTGMPFL, MSYINTWALLITLIAVSMTAS, LILGSIFMGFLISMNTIPHTT, MTMPPHLKFMALAVTLLGFTV, and LMKLYFLSFLLSITLGLLIAL.

It belongs to the complex I subunit 5 family. In terms of assembly, core subunit of respiratory chain NADH dehydrogenase (Complex I) which is composed of 45 different subunits.

The protein resides in the mitochondrion inner membrane. It catalyses the reaction a ubiquinone + NADH + 5 H(+)(in) = a ubiquinol + NAD(+) + 4 H(+)(out). Its function is as follows. Core subunit of the mitochondrial membrane respiratory chain NADH dehydrogenase (Complex I) which catalyzes electron transfer from NADH through the respiratory chain, using ubiquinone as an electron acceptor. Essential for the catalytic activity and assembly of complex I. This chain is NADH-ubiquinone oxidoreductase chain 5 (MT-ND5), found in Loxodonta africana (African elephant).